The following is a 1047-amino-acid chain: Atrial natriuretic peptide receptor 2 (1047 aa).

A signal peptide spans 1 to 16; that stretch reads MALPSLLLVVAALAGG. The Extracellular segment spans residues 17-458; the sequence is VRPPGARNLT…DKTPLSTLAI (442 aa). Asn24 and Asn35 each carry an N-linked (GlcNAc...) asparagine glycan. Cys75 and Cys101 form a disulfide bridge. Asn161, Asn195, Asn244, Asn277, and Asn349 each carry an N-linked (GlcNAc...) asparagine glycan. The helical transmembrane segment at 459-478 threads the bilayer; that stretch reads VALGTGVTFIMFGVSSFLIF. At 479–1047 the chain is on the cytoplasmic side; the sequence is RKLMLEKELA…GEQKGPPGLL (569 aa). Phosphoserine is present on Ser513. In terms of domain architecture, Protein kinase spans 513-786; it reads SRLTLSLRGS…PDFGQIKGFI (274 aa). The residue at position 516 (Thr516) is a Phosphothreonine. Ser518, Ser522, Ser523, and Ser526 each carry phosphoserine. A Phosphothreonine modification is found at Thr529. The region spanning 861–991 is the Guanylate cyclase domain; it reads TIYFSDIVGF…DTVNTASRME (131 aa).

Belongs to the adenylyl cyclase class-4/guanylyl cyclase family. Phosphorylated. Phosphorylation of the protein kinase-like domain is required for full activation by CNP. Post-translationally, glycosylated. In terms of tissue distribution, widely expressed. Expressed in the columnar proliferating and prehypertrophic chondrocyte layers of the tibia.

The protein resides in the cell membrane. It carries out the reaction GTP = 3',5'-cyclic GMP + diphosphate. In terms of biological role, receptor for the C-type natriuretic peptide NPPC/CNP hormone. Has guanylate cyclase activity upon binding of its ligand. May play a role in the regulation of skeletal growth. This is Atrial natriuretic peptide receptor 2 (Npr2) from Mus musculus (Mouse).